The primary structure comprises 899 residues: Bifunctional uridylyltransferase/uridylyl-removing enzyme (899 aa).

Residues 1–347 (MFISDPTDSL…PESERPEKSV (347 aa)) are uridylyltransferase. A uridylyl-removing region spans residues 348–718 (LNARFNRVGD…EHRELALDAV (371 aa)). Residues 465–581 (VDAHILLLIR…TKFANLVGNV (117 aa)) form the HD domain. 2 ACT domains span residues 719-804 (QIFI…RLPR) and 827-899 (VMSL…TPSC).

Belongs to the GlnD family. The cofactor is Mg(2+).

The enzyme catalyses [protein-PII]-L-tyrosine + UTP = [protein-PII]-uridylyl-L-tyrosine + diphosphate. It carries out the reaction [protein-PII]-uridylyl-L-tyrosine + H2O = [protein-PII]-L-tyrosine + UMP + H(+). Uridylyltransferase (UTase) activity is inhibited by glutamine, while glutamine activates uridylyl-removing (UR) activity. Functionally, modifies, by uridylylation and deuridylylation, the PII regulatory proteins (GlnB and homologs), in response to the nitrogen status of the cell that GlnD senses through the glutamine level. Under low glutamine levels, catalyzes the conversion of the PII proteins and UTP to PII-UMP and PPi, while under higher glutamine levels, GlnD hydrolyzes PII-UMP to PII and UMP (deuridylylation). Thus, controls uridylylation state and activity of the PII proteins, and plays an important role in the regulation of nitrogen assimilation and metabolism. In Psychrobacter sp. (strain PRwf-1), this protein is Bifunctional uridylyltransferase/uridylyl-removing enzyme.